The chain runs to 432 residues: Keratin, type I cytoskeletal 18-B (432 aa).

Residues 1-21 show a composition bias toward low complexity; that stretch reads MSYSRSMYSSSSVVGGSPYRS. The segment at 1-44 is disordered; it reads MSYSRSMYSSSSVVGGSPYRSLSSAPRFAPGSSAASVHAGPGGS. The interval 2-82 is head; the sequence is SYSRSMYSSS…NVSLMGGAQN (81 aa). The segment at 83-118 is coil 1A; it reads EKETMQDLNDRLASYLERVRSLETANKELEVQIRQH. Residues 83-393 form the IF rod domain; the sequence is EKETMQDLND…RLLEGDSFDL (311 aa). Residues 119-134 are linker 1; the sequence is TEKKGPAKDWSPYYKA. The coil 1B stretch occupies residues 135–226; sequence IEDLKKQVFD…KNHQDDVNEL (92 aa). Positions 227-250 are linker 12; the sequence is QAQIARSAVTVEVDAPKSQDLGKI. The tract at residues 251–388 is coil 2; the sequence is MAELRAQYDG…IHTYRRLLEG (138 aa). The tract at residues 389 to 432 is tail; sequence DSFDLQDAVPTVTTQTVKKVITTTQRIVDGKVVAESNDTEVLKA.

This sequence belongs to the intermediate filament family. As to quaternary structure, heterotetramer of two type I and two type II keratins. Keratin-18 associates with keratin-8. In terms of processing, phosphorylated. Post-translationally, proteolytically cleaved by caspases during epithelial cell apoptosis.

Its function is as follows. When phosphorylated, plays a role in filament reorganization. The sequence is that of Keratin, type I cytoskeletal 18-B (krt18-b) from Xenopus laevis (African clawed frog).